We begin with the raw amino-acid sequence, 337 residues long: tRNA dimethylallyltransferase (337 aa).

24–31 contacts ATP; that stretch reads GPTGAGKT. Residue 26–31 participates in substrate binding; the sequence is TGAGKT. Interaction with substrate tRNA regions lie at residues 49 to 52 and 188 to 192; these read DSRQ and QRAVR.

Belongs to the IPP transferase family. In terms of assembly, monomer. The cofactor is Mg(2+).

The enzyme catalyses adenosine(37) in tRNA + dimethylallyl diphosphate = N(6)-dimethylallyladenosine(37) in tRNA + diphosphate. Functionally, catalyzes the transfer of a dimethylallyl group onto the adenine at position 37 in tRNAs that read codons beginning with uridine, leading to the formation of N6-(dimethylallyl)adenosine (i(6)A). In Nitratidesulfovibrio vulgaris (strain DSM 19637 / Miyazaki F) (Desulfovibrio vulgaris), this protein is tRNA dimethylallyltransferase.